A 119-amino-acid polypeptide reads, in one-letter code: Large ribosomal subunit protein uL18 (119 aa).

A disordered region spans residues 54 to 76; that stretch reads LTSASTLADDVEGETPTEESRSV.

The protein belongs to the universal ribosomal protein uL18 family. As to quaternary structure, part of the 50S ribosomal subunit; part of the 5S rRNA/L5/L18/L25 subcomplex. Contacts the 5S and 23S rRNAs.

Its function is as follows. This is one of the proteins that bind and probably mediate the attachment of the 5S RNA into the large ribosomal subunit, where it forms part of the central protuberance. The polypeptide is Large ribosomal subunit protein uL18 (Salinibacter ruber (strain DSM 13855 / M31)).